The sequence spans 90 residues: Aminoacyl carrier protein 1 (90 aa).

In terms of domain architecture, Carrier spans 6–84 (TDVRNRIIKL…TLERMVMTQL (79 aa)). S42 carries the post-translational modification O-(pantetheine 4'-phosphoryl)serine.

4'-phosphopantetheine is transferred from CoA to a specific serine of the apo-form of this carrier protein.

Its function is as follows. Aminoacyl carrier protein. Can be charged with L-glycine via the formation of a thioester bond between the amino acid and the 4'-phosphopantetheinyl prosthetic group, catalyzed by the bll0957 ligase. The protein is Aminoacyl carrier protein 1 of Bradyrhizobium diazoefficiens (strain JCM 10833 / BCRC 13528 / IAM 13628 / NBRC 14792 / USDA 110).